The primary structure comprises 868 residues: Muscle, skeletal receptor tyrosine protein kinase (868 aa).

The signal sequence occupies residues 1 to 21 (MRELVNIPLLQMLTLVAFSGT). Over 22–494 (EKLPKAPVIT…FAVSPAYSMT (473 aa)) the chain is Extracellular. 3 Ig-like domains span residues 28 to 116 (PVIT…GALQ), 121 to 205 (PKIT…KLVK), and 212 to 302 (ARIL…ATVS). Cystine bridges form between Cys-49-Cys-99, Cys-98-Cys-112, and Cys-142-Cys-190. Asn-222 carries an N-linked (GlcNAc...) asparagine glycan. Disulfide bonds link Cys-233/Cys-282, Cys-317/Cys-382, Cys-325/Cys-375, Cys-366/Cys-406, Cys-394/Cys-447, and Cys-398/Cys-434. The FZ domain maps to 312-450 (ESKGYCAQYR…HQDPTACTRL (139 aa)). Asn-338 carries N-linked (GlcNAc...) asparagine glycosylation. N-linked (GlcNAc...) asparagine glycosylation occurs at Asn-459. Residues 495–515 (VIISIMSCFAVFALLTITTLY) traverse the membrane as a helical segment. Residues 516–868 (CCRRRREWKN…CERAEGTVGV (353 aa)) are Cytoplasmic-facing. The residue at position 553 (Tyr-553) is a Phosphotyrosine; by autocatalysis. One can recognise a Protein kinase domain in the interval 574–855 (IEYVRDIGEG…PSFCSIHRIL (282 aa)). Residues 580–588 (IGEGAFGRV) and Lys-608 contribute to the ATP site. A phosphoserine; by CK2 mark is found at Ser-680 and Ser-697. The active-site Proton acceptor is the Asp-724. The residue at position 754 (Tyr-754) is a Phosphotyrosine; by autocatalysis.

The protein belongs to the protein kinase superfamily. Tyr protein kinase family. As to quaternary structure, monomer. Homodimer. Interacts with LRP4; the heterodimer forms an AGRIN receptor complex that binds AGRIN resulting in activation of MUSK. Forms a heterotetramer composed of 2 DOK7 and 2 MUSK molecules which facilitates MUSK trans-autophosphorylation on tyrosine residue and activation. Interacts (via cytoplasmic part) with DOK7 (via IRS-type PTB domain); requires MUSK phosphorylation. Interacts with DVL1 (via DEP domain); the interaction is direct and mediates the formation of a DVL1, MUSK and PAK1 ternary complex involved in AChR clustering. Interacts with PDZRN3; this interaction is enhanced by agrin. Interacts with FNTA; the interaction is direct and mediates AGRIN-induced phosphorylation and activation of FNTA. Interacts with CSNK2B; mediates regulation by CK2. Interacts (via the cytoplasmic domain) with DNAJA3. Interacts with NSF; may regulate MUSK endocytosis and activity. Interacts with CAV3; may regulate MUSK signaling. Interacts with RNF31. Interacts with DOK7. Mg(2+) is required as a cofactor. In terms of processing, ubiquitinated by PDZRN3. Ubiquitination promotes endocytosis and lysosomal degradation. Phosphorylated. Phosphorylation is induced by AGRIN in a LRP4-dependent manner. Autophosphorylated. Autophosphorylation at Tyr-553 is required for interaction with DOK7 which in turn stimulates the phosphorylation and the activation of MUSK. Post-translationally, neddylated. As to expression, muscle specific.

Its subcellular location is the postsynaptic cell membrane. It catalyses the reaction L-tyrosyl-[protein] + ATP = O-phospho-L-tyrosyl-[protein] + ADP + H(+). With respect to regulation, positively regulated by CK2. Receptor tyrosine kinase which plays a central role in the formation and the maintenance of the neuromuscular junction (NMJ), the synapse between the motor neuron and the skeletal muscle. Recruitment of AGRIN by LRP4 to the MUSK signaling complex induces phosphorylation and activation of MUSK, the kinase of the complex. The activation of MUSK in myotubes regulates the formation of NMJs through the regulation of different processes including the specific expression of genes in subsynaptic nuclei, the reorganization of the actin cytoskeleton and the clustering of the acetylcholine receptors (AChR) in the postsynaptic membrane. May regulate AChR phosphorylation and clustering through activation of ABL1 and Src family kinases which in turn regulate MUSK. DVL1 and PAK1 that form a ternary complex with MUSK are also important for MUSK-dependent regulation of AChR clustering. May positively regulate Rho family GTPases through FNTA. Mediates the phosphorylation of FNTA which promotes prenylation, recruitment to membranes and activation of RAC1 a regulator of the actin cytoskeleton and of gene expression. Other effectors of the MUSK signaling include DNAJA3 which functions downstream of MUSK. May also play a role within the central nervous system by mediating cholinergic responses, synaptic plasticity and memory formation. The protein is Muscle, skeletal receptor tyrosine protein kinase (Musk) of Rattus norvegicus (Rat).